Consider the following 113-residue polypeptide: uncharacterized protein (113 aa).

This is an uncharacterized protein from Saccharomyces cerevisiae (strain ATCC 204508 / S288c) (Baker's yeast).